Consider the following 352-residue polypeptide: C-C chemokine receptor type 5 (352 aa).

Residues 1–30 (MDYQVSSPTYDIDYYTSEPCQKTNVKQIAA) lie on the Extracellular side of the membrane. Position 3 is a sulfotyrosine (tyrosine 3). Serine 6 and serine 7 each carry an O-linked (GalNAc...) serine glycan. Sulfotyrosine occurs at positions 10, 14, and 15. 2 disulfide bridges follow: cysteine 20/cysteine 269 and cysteine 101/cysteine 178. A helical transmembrane segment spans residues 31-58 (RLLPPLYSLVFIFGFVGNMLVILILINC). Residues 59-68 (KRLKSMTDIY) lie on the Cytoplasmic side of the membrane. The chain crosses the membrane as a helical span at residues 69–89 (LLNLAISDLFFLLTVPFWAHY). Topologically, residues 90 to 102 (AAAQWDFGNTMCQ) are extracellular. A helical transmembrane segment spans residues 103–124 (LLTGLYFIGFFSGIFFIILLTI). Residues 125-141 (DRYLAIVHAVFALKART) are Cytoplasmic-facing. A helical membrane pass occupies residues 142 to 166 (VTFGVVTSVITWVVAVFASLPGIIF). Residues 167–198 (TRSQKEGLHYTCSSHFPYSQYQFWKNFQTLKI) are Extracellular-facing. A helical transmembrane segment spans residues 199 to 218 (VILGLVLPLLVMVICYSGIL). At 219–235 (KTLLRCRNEKKRHRAVR) the chain is on the cytoplasmic side. The helical transmembrane segment at 236 to 260 (LIFTIMIVYFLFWAPYNIVLLLNTF) threads the bilayer. Residues 261–277 (QEFFGLNNCSSSNRLDQ) are Extracellular-facing. A helical transmembrane segment spans residues 278–301 (AMQVTETLGMTHCCINPIIYAFVG). Residues 302-352 (EKFRNYLLVFFQKHIAKRFCKCCSIFQQEAPERASSVYTRSTGEQEISVGL) are Cytoplasmic-facing. Residues cysteine 321, cysteine 323, and cysteine 324 are each lipidated (S-palmitoyl cysteine). Phosphoserine; by BARK1 occurs at positions 336, 337, 342, and 349.

Belongs to the G-protein coupled receptor 1 family. In terms of assembly, interacts with PRAF2. Efficient ligand binding to CCL3/MIP-1alpha and CCL4/MIP-1beta requires sulfation, O-glycosylation and sialic acid modifications. Glycosylation on Ser-6 is required for efficient binding of CCL4. Interacts with GRK2. Interacts with ARRB1 and ARRB2. Interacts with CNIH4. Interacts with S100A4; this interaction stimulates T-lymphocyte chemotaxis. In terms of processing, sulfated on at least 2 of the N-terminal tyrosines. Sulfation is required for efficient binding of the chemokines, CCL3 and CCL4. Palmitoylation in the C-terminal is important for cell surface expression. Post-translationally, phosphorylation on serine residues in the C-terminal is stimulated by binding CC chemokines especially by APO-RANTES. In terms of processing, O-glycosylated, but not N-glycosylated. Ser-6 appears to be the major site even if Ser-7 may be also O-glycosylated. Also sialylated glycans present which contribute to chemokine binding. Thr-16 and Ser-17 may also be glycosylated and, if so, with small moieties such as a T-antigen.

The protein localises to the cell membrane. In terms of biological role, receptor for a number of inflammatory CC-chemokines including CCL3/MIP-1-alpha, CCL4/MIP-1-beta and RANTES and subsequently transduces a signal by increasing the intracellular calcium ion level. May play a role in the control of granulocytic lineage proliferation or differentiation. Participates in T-lymphocyte migration to the infection site by acting as a chemotactic receptor. The sequence is that of C-C chemokine receptor type 5 (CCR5) from Gorilla gorilla gorilla (Western lowland gorilla).